A 294-amino-acid polypeptide reads, in one-letter code: Large ribosomal subunit protein uL4m (294 aa).

A disordered region spans residues Glu-119–Gly-139. Residue Arg-147 is modified to Omega-N-methylarginine.

It belongs to the universal ribosomal protein uL4 family. Component of the mitochondrial ribosome large subunit (39S) which comprises a 16S rRNA and about 50 distinct proteins. Interacts with MIEF1 upstream open reading frame protein.

It is found in the mitochondrion. This chain is Large ribosomal subunit protein uL4m (Mrpl4), found in Mus musculus (Mouse).